The following is a 154-amino-acid chain: Protein ripply (154 aa).

The WRPW motif motif lies at 38–41 (WRPW). Disordered stretches follow at residues 54-86 (IRER…FQHP) and 121-154 (EDPA…PILN). Residues 85–119 (HPVKLHWSKPVYDYMYQYGKQLLDAFPVQATICIV) are ripply homology domain. The span at 121–140 (EDPAQSDDSDFESDYEDDSD) shows a compositional bias: acidic residues.

Belongs to the ripply family. In the late gastrula stage, expression appears in the dorsal presomitic mesoderm and in the first three pairs of nascent somites. Expressed strongly in forming somites and then expression is rapidly down-regulated except in the first somite pair where expression is maintained for a longer period. Also expressed in the presumptive notochord and in the tail bud at the 48 hour larval stage. Expression disappears by the 72 hour stage.

It localises to the nucleus. May play a role in somitogenesis. In Branchiostoma belcheri (Amphioxus), this protein is Protein ripply.